Reading from the N-terminus, the 441-residue chain is Xylose isomerase (441 aa).

Catalysis depends on residues H100 and D103. 7 residues coordinate Mg(2+): E231, E267, H270, D295, D306, D308, and D338.

It belongs to the xylose isomerase family. In terms of assembly, homotetramer. It depends on Mg(2+) as a cofactor.

It is found in the cytoplasm. The catalysed reaction is alpha-D-xylose = alpha-D-xylulofuranose. The sequence is that of Xylose isomerase from Paraburkholderia phymatum (strain DSM 17167 / CIP 108236 / LMG 21445 / STM815) (Burkholderia phymatum).